We begin with the raw amino-acid sequence, 353 residues long: Histidinol-phosphate aminotransferase (353 aa).

Lys-209 is subject to N6-(pyridoxal phosphate)lysine.

The protein belongs to the class-II pyridoxal-phosphate-dependent aminotransferase family. Histidinol-phosphate aminotransferase subfamily. Homodimer. Requires pyridoxal 5'-phosphate as cofactor.

The catalysed reaction is L-histidinol phosphate + 2-oxoglutarate = 3-(imidazol-4-yl)-2-oxopropyl phosphate + L-glutamate. The protein operates within amino-acid biosynthesis; L-histidine biosynthesis; L-histidine from 5-phospho-alpha-D-ribose 1-diphosphate: step 7/9. This Buchnera aphidicola subsp. Cinara cedri (strain Cc) protein is Histidinol-phosphate aminotransferase.